The chain runs to 429 residues: Adenylosuccinate synthetase (429 aa).

GTP-binding positions include 12–18 (GDEGKGK) and 40–42 (GHT). Asp-13 (proton acceptor) is an active-site residue. Positions 13 and 40 each coordinate Mg(2+). IMP is bound by residues 13–16 (DEGK), 38–41 (NAGH), Thr-128, Arg-142, Gln-223, and Arg-302. The active-site Proton donor is the His-41. 298-304 (TVTGRPR) is a binding site for substrate. Residues Arg-304, 330–332 (LLD), and 412–414 (SVG) each bind GTP.

It belongs to the adenylosuccinate synthetase family. Homodimer. Requires Mg(2+) as cofactor.

It localises to the cytoplasm. It carries out the reaction IMP + L-aspartate + GTP = N(6)-(1,2-dicarboxyethyl)-AMP + GDP + phosphate + 2 H(+). Its pathway is purine metabolism; AMP biosynthesis via de novo pathway; AMP from IMP: step 1/2. Functionally, plays an important role in the de novo pathway of purine nucleotide biosynthesis. Catalyzes the first committed step in the biosynthesis of AMP from IMP. The protein is Adenylosuccinate synthetase of Lactobacillus delbrueckii subsp. bulgaricus (strain ATCC 11842 / DSM 20081 / BCRC 10696 / JCM 1002 / NBRC 13953 / NCIMB 11778 / NCTC 12712 / WDCM 00102 / Lb 14).